A 555-amino-acid polypeptide reads, in one-letter code: 2-succinyl-5-enolpyruvyl-6-hydroxy-3-cyclohexene-1-carboxylate synthase (555 aa).

The protein belongs to the TPP enzyme family. MenD subfamily. As to quaternary structure, homodimer. Mg(2+) serves as cofactor. Requires Mn(2+) as cofactor. It depends on thiamine diphosphate as a cofactor.

The enzyme catalyses isochorismate + 2-oxoglutarate + H(+) = 5-enolpyruvoyl-6-hydroxy-2-succinyl-cyclohex-3-ene-1-carboxylate + CO2. It participates in quinol/quinone metabolism; 1,4-dihydroxy-2-naphthoate biosynthesis; 1,4-dihydroxy-2-naphthoate from chorismate: step 2/7. It functions in the pathway quinol/quinone metabolism; menaquinone biosynthesis. Its function is as follows. Catalyzes the thiamine diphosphate-dependent decarboxylation of 2-oxoglutarate and the subsequent addition of the resulting succinic semialdehyde-thiamine pyrophosphate anion to isochorismate to yield 2-succinyl-5-enolpyruvyl-6-hydroxy-3-cyclohexene-1-carboxylate (SEPHCHC). This chain is 2-succinyl-5-enolpyruvyl-6-hydroxy-3-cyclohexene-1-carboxylate synthase, found in Bacteroides fragilis (strain ATCC 25285 / DSM 2151 / CCUG 4856 / JCM 11019 / LMG 10263 / NCTC 9343 / Onslow / VPI 2553 / EN-2).